An 892-amino-acid polypeptide reads, in one-letter code: MKKLTTNEIRKMWLDFFKEKNHHFLEPVSLIPVEDPSLLWINSGVATLKPYFDGRKTPPSPRLTNSQKAIRTNDIENVGVTARHHTMFEMLGNFSIGDYFKKEAISFAWELLTSDKWFAIPVEKLYITVFNEDIEAYEYWINDIGIKQDHIFRLTRDTNFWDVGQGPCGPNTEIFFDRGEKWDKENIGPRLLAEDIENDRYIEIWNIVFSQFNNDGFNNYSELPRKNIDTGAGLERIASIFQDTPTNFETDIFWPTIKQIENICDANFKYSIENYFDEKAEQTKINTAFKVIADHVRATSFAIADGVFPGNKDRGYIIRRLIRRALMKGMELGINGPFLSTLVINVIDVMKDFYPYLLEKQNLIETTILIEEEKFLKTLSKGYEALNKMIENDKKVTGKNALLLFESYGYPIEQTIEIAEDRKVKVEIEEFNSLLEQAKEQARNARKDLKAWDKQNEIFTKINVESEFTGWEETSHKNAKIVYIFTDDEILTEATDKEVYVILDKTPFYAEKGGQAADKGYLVNKEARCEVIDTQQGPNHQHIHKILLDGSIKIGDQIDAFVDETKRTLTMKNHSGTHLIHSALRVVLGETVMQSGSYNDEHGLRMDFTYNDSIKAEELIAAEKLVLDKINEKINREVYFCSMKDAVSKYGALAFFTEKYDDIVRVVKFGDFSSELCGGTHVDNTIDIEDFMITGLESKGSGVYRVKCLTSKKAINEYLNTEFNKLLKLIQEQNSKYENTKLIQADQNIENIVKESVTKTISKESIQELKLILEKLSAALKIYERKIEDLLTSKKLEQFKAFEPITNDKGVGTIEQQVNGLNIKDMKNLVDEYKNKFEKLIIILTSETEEGNFVVVGVSEKIQNEYSAIEIFKNLTISPKGGGNSSLAQGKF.

Zn(2+)-binding residues include H574, H578, C677, and H681.

This sequence belongs to the class-II aminoacyl-tRNA synthetase family. It depends on Zn(2+) as a cofactor.

The protein resides in the cytoplasm. It catalyses the reaction tRNA(Ala) + L-alanine + ATP = L-alanyl-tRNA(Ala) + AMP + diphosphate. Catalyzes the attachment of alanine to tRNA(Ala) in a two-step reaction: alanine is first activated by ATP to form Ala-AMP and then transferred to the acceptor end of tRNA(Ala). Also edits incorrectly charged Ser-tRNA(Ala) and Gly-tRNA(Ala) via its editing domain. The protein is Alanine--tRNA ligase of Mesoplasma florum (strain ATCC 33453 / NBRC 100688 / NCTC 11704 / L1) (Acholeplasma florum).